A 561-amino-acid polypeptide reads, in one-letter code: Asparagine synthetase [glutamine-hydrolyzing] (561 aa).

The active-site For GATase activity is Cys2. A Glutamine amidotransferase type-2 domain is found at 2–191 (CGIWALFGSD…PGHYEVLDLK (190 aa)). Residues 49–53 (RLAVV), 75–77 (NGE), and Asp97 contribute to the L-glutamine site. Residues 213–536 (HALYDSVEKL…PGRADWLTHY (324 aa)) enclose the Asparagine synthetase domain. ATP-binding positions include Leu256, Ile288, and 363-364 (SG). Lys385 carries the post-translational modification N6-acetyllysine. Thr545 carries the phosphothreonine modification. Ser557 carries the post-translational modification Phosphoserine.

The catalysed reaction is L-aspartate + L-glutamine + ATP + H2O = L-asparagine + L-glutamate + AMP + diphosphate + H(+). It participates in amino-acid biosynthesis; L-asparagine biosynthesis; L-asparagine from L-aspartate (L-Gln route): step 1/1. This Cricetulus griseus (Chinese hamster) protein is Asparagine synthetase [glutamine-hydrolyzing] (ASNS).